Here is a 257-residue protein sequence, read N- to C-terminus: Zinc-finger homeodomain protein 6 (257 aa).

Residues 1–35 are disordered; it reads MEFRGHDEPVDEMGVAYGRTPPSSSSSPAASASAG. Positions 21 to 35 are enriched in low complexity; it reads PPSSSSSPAASASAG. The segment at 45 to 93 adopts a ZF-HD dimerization-type; degenerate zinc-finger fold; sequence YHECLRNHAAAMGGHVVDGCGEFMPMPGDAADALKCAACGCHRSFHRKD. Positions 106 to 125 are enriched in pro residues; that stretch reads PSPPTPRVPLLMPPPQPQPH. Disordered regions lie at residues 106-182 and 228-257; these read PSPP…TKFT and NNKSSIGSSSGGGSRRQPQEQQSQQQQQQQ. Positions 141 to 155 are enriched in low complexity; sequence YHHTPSGSGGTTTES. Residues 174–237 constitute a DNA-binding region (homeobox); sequence RKRFRTKFTP…NNKSSIGSSS (64 aa). The span at 242-257 shows a compositional bias: low complexity; sequence RRQPQEQQSQQQQQQQ.

Homo- and heterodimer with other ZFHD proteins.

The protein resides in the nucleus. In terms of biological role, putative transcription factor. This is Zinc-finger homeodomain protein 6 (ZHD6) from Oryza sativa subsp. indica (Rice).